We begin with the raw amino-acid sequence, 247 residues long: Osmotin-like protein OSML81 (247 aa).

A signal peptide spans 1-21; it reads MGYLRSSFIFSLLAFVTYTYA. 8 disulfides stabilise this stretch: Cys-30–Cys-225, Cys-72–Cys-82, Cys-87–Cys-93, Cys-141–Cys-213, Cys-146–Cys-196, Cys-154–Cys-164, Cys-168–Cys-177, and Cys-178–Cys-183.

The protein belongs to the thaumatin family.

This Solanum commersonii (Commerson's wild potato) protein is Osmotin-like protein OSML81.